The chain runs to 480 residues: RNA-splicing ligase RtcB homolog (480 aa).

Mn(2+) contacts are provided by Asp93, Cys96, His202, His234, and His328. A GMP-binding site is contributed by 201–205; sequence NHYTE. GMP contacts are provided by residues 328–329, 377–380, Ser384, 403–406, and Lys479; these read HN, GGTM, and HGAG. His403 acts as the GMP-histidine intermediate in catalysis.

The protein belongs to the RtcB family. In terms of assembly, catalytic component of the tRNA-splicing ligase complex. Mn(2+) serves as cofactor.

The enzyme catalyses a 3'-end 3'-phospho-ribonucleotide-RNA + a 5'-end dephospho-ribonucleoside-RNA + GTP = a ribonucleotidyl-ribonucleotide-RNA + GMP + diphosphate. The catalysed reaction is a 3'-end 2',3'-cyclophospho-ribonucleotide-RNA + a 5'-end dephospho-ribonucleoside-RNA + GTP + H2O = a ribonucleotidyl-ribonucleotide-RNA + GMP + diphosphate + H(+). In terms of biological role, catalytic subunit of the tRNA-splicing ligase complex that acts by directly joining spliced tRNA halves to mature-sized tRNAs by incorporating the precursor-derived splice junction phosphate into the mature tRNA as a canonical 3',5'-phosphodiester. May act as an RNA ligase with broad substrate specificity, and may function toward other RNAs. This chain is RNA-splicing ligase RtcB homolog, found in Thalassiosira pseudonana (Marine diatom).